Here is a 373-residue protein sequence, read N- to C-terminus: NADPH-dependent 3-keto-steroid reductase Hsd3b5 (373 aa).

Residues 10–15 (GAGGFL), Tyr-155, and Lys-159 each bind NADP(+). Catalysis depends on Lys-159, which acts as the Proton donor. A helical membrane pass occupies residues 288 to 308 (LPLLYWLAFLLETVSFLLRPF). An N6-acetyllysine modification is found at Lys-350.

It belongs to the 3-beta-HSD family. In terms of tissue distribution, expressed predominantly in male liver.

It is found in the endoplasmic reticulum membrane. The protein resides in the mitochondrion membrane. The enzyme catalyses a 3beta-hydroxysteroid + NADP(+) = a 3-oxosteroid + NADPH + H(+). It catalyses the reaction 5alpha-androstane-3beta,17beta-diol + NADP(+) = 17beta-hydroxy-5alpha-androstan-3-one + NADPH + H(+). The catalysed reaction is 3beta-hydroxy-5alpha-androstan-17-one + NADP(+) = 5alpha-androstan-3,17-dione + NADPH + H(+). It participates in steroid metabolism. In terms of biological role, responsible for the reduction of the oxo group on the C-3 of 5alpha-androstane steroids. Catalyzes the conversion of dihydrotestosterone to its inactive form 5alpha-androstanediol, that does not bind androgen receptor/AR. Also converts androstanedione, a precursor of testosterone and estrone, to epiandrosterone. Does not function as an isomerase. The polypeptide is NADPH-dependent 3-keto-steroid reductase Hsd3b5 (Rattus norvegicus (Rat)).